Here is a 90-residue protein sequence, read N- to C-terminus: MKFRPLGERVLVERVEEDTKTSSGIIIPDNAKEKPLMGIVKAVSAKIKDDKILKENDKVVFGKYKGAEIKLDSKEFIVLELDDILGVIEK.

This sequence belongs to the GroES chaperonin family. In terms of assembly, heptamer of 7 subunits arranged in a ring. Interacts with the chaperonin GroEL.

Its subcellular location is the cytoplasm. Together with the chaperonin GroEL, plays an essential role in assisting protein folding. The GroEL-GroES system forms a nano-cage that allows encapsulation of the non-native substrate proteins and provides a physical environment optimized to promote and accelerate protein folding. GroES binds to the apical surface of the GroEL ring, thereby capping the opening of the GroEL channel. The chain is Co-chaperonin GroES from Helicobacter hepaticus (strain ATCC 51449 / 3B1).